Here is a 430-residue protein sequence, read N- to C-terminus: RNA-binding protein 34 (430 aa).

Disordered stretches follow at residues Met-1–Arg-55, Val-72–Glu-123, and Glu-134–Ala-153. A phosphoserine mark is found at Ser-14, Ser-28, and Ser-99. A compositionally biased stretch (basic and acidic residues) spans Asp-23–Arg-34. A compositionally biased stretch (basic and acidic residues) spans Thr-113–Glu-123. Lys-151 carries the N6-acetyllysine modification. RRM domains follow at residues Arg-185 to Glu-280 and Arg-287 to Asn-364. Lys-242 is covalently cross-linked (Glycyl lysine isopeptide (Lys-Gly) (interchain with G-Cter in SUMO2)). A Phosphoserine modification is found at Ser-288. 2 disordered regions span residues Lys-365–Glu-395 and Lys-411–Lys-430.

It belongs to the RRM RBM34 family.

It localises to the nucleus. The protein localises to the nucleolus. This chain is RNA-binding protein 34 (RBM34), found in Homo sapiens (Human).